Here is a 317-residue protein sequence, read N- to C-terminus: Olfactory receptor 2T27 (317 aa).

Residues M1–R22 lie on the Extracellular side of the membrane. N-linked (GlcNAc...) asparagine glycosylation is present at N5. A helical membrane pass occupies residues F23–V43. The Cytoplasmic segment spans residues V44–Y60. A helical membrane pass occupies residues F61–V83. At D84 to C97 the chain is on the extracellular side. C97 and C189 are disulfide-bonded. Residues T98–M118 traverse the membrane as a helical segment. Residues S119–K139 are Cytoplasmic-facing. The helical transmembrane segment at I140–T160 threads the bilayer. Over P161–T197 the chain is Extracellular. A helical transmembrane segment spans residues A198–Y218. Over T219–H244 the chain is Cytoplasmic. Residues M245–Y265 form a helical membrane-spanning segment. At H266–D271 the chain is on the extracellular side. The chain crosses the membrane as a helical span at residues K272–L292. Residues R293 to F317 lie on the Cytoplasmic side of the membrane.

It belongs to the G-protein coupled receptor 1 family.

It is found in the cell membrane. Functionally, odorant receptor. This Homo sapiens (Human) protein is Olfactory receptor 2T27 (OR2T27).